Reading from the N-terminus, the 476-residue chain is Dihydrolipoyl dehydrogenase (476 aa).

FAD-binding positions include 36–45, Lys-54, and Ala-117; that span reads EHQERLGGVC. Cys-45 and Cys-50 are oxidised to a cystine. NAD(+) contacts are provided by residues 182–186, Asp-205, Val-238, and 271–274; these read GGGII and AIGR. FAD contacts are provided by Asp-314 and Ala-322. His-446 serves as the catalytic Proton acceptor.

This sequence belongs to the class-I pyridine nucleotide-disulfide oxidoreductase family. As to quaternary structure, homodimer. Requires FAD as cofactor.

Its subcellular location is the cytoplasm. It catalyses the reaction N(6)-[(R)-dihydrolipoyl]-L-lysyl-[protein] + NAD(+) = N(6)-[(R)-lipoyl]-L-lysyl-[protein] + NADH + H(+). Lipoamide dehydrogenase is a component of the alpha-ketoacid dehydrogenase complexes. This chain is Dihydrolipoyl dehydrogenase (lpdA), found in Buchnera aphidicola subsp. Schizaphis graminum (strain Sg).